A 93-amino-acid chain; its full sequence is UPF0369 protein RC0209 (93 aa).

A disordered region spans residues 1-24; that stretch reads MDDKKDNRHLSKPAYREECTGDTE. The region spanning 8 to 55 is the RPE1 insert domain; sequence RHLSKPAYREECTGDTERSTTAYMDILEDVSTGSTSKLPLEAKFVKIS.

It belongs to the SDHAF4 family.

This is UPF0369 protein RC0209 from Rickettsia conorii (strain ATCC VR-613 / Malish 7).